A 713-amino-acid polypeptide reads, in one-letter code: Cadherin-13 (713 aa).

The first 22 residues, 1-22 (MQPATPLVLCVLLSQVLLLTSA), serve as a signal peptide directing secretion. The propeptide occupies 23–138 (EDLDCTPGFQ…RTSPVPRQKR (116 aa)). 2 N-linked (GlcNAc...) asparagine glycosylation sites follow: asparagine 52 and asparagine 86. 5 Cadherin domains span residues 139–245 (SIVV…RPIF), 246–363 (REGP…SPKF), 364–477 (TKKE…SPVF), 478–585 (YPDP…APFI), and 584–694 (FIYP…AAGA). A disordered region spans residues 156–178 (PRDVGKVVDSDRPEGSKFRLTGK). A compositionally biased stretch (basic and acidic residues) spans 158 to 172 (DVGKVVDSDRPEGSK). Residues asparagine 382, asparagine 489, asparagine 500, asparagine 530, asparagine 598, asparagine 638, and asparagine 671 are each glycosylated (N-linked (GlcNAc...) asparagine). A lipid anchor (GPI-anchor amidated glycine) is attached at glycine 693. The propeptide at 694–713 (APHFSAATALLLSLFSLARL) is removed in mature form.

In terms of assembly, by contrast to classical cadherins, homodimerization in trans is not mediated by cadherin EC1 domain strand-swapping, but instead through a homophilic adhesive interface which joins two elongated EC1-EC2 domains through a region near their Ca2+-binding sites to form a tetrahedral, X-like shape.

The protein localises to the cell membrane. The protein resides in the cytoplasm. Functionally, cadherins are calcium-dependent cell adhesion proteins. They preferentially interact with themselves in a homophilic manner in connecting cells; cadherins may thus contribute to the sorting of heterogeneous cell types. May act as a negative regulator of neural cell growth. The polypeptide is Cadherin-13 (CDH13) (Bos taurus (Bovine)).